The primary structure comprises 258 residues: 4-hydroxy-tetrahydrodipicolinate reductase (258 aa).

An NAD(+)-binding site is contributed by 10–15 (GCLGRM). Position 38 (Lys-38) interacts with NADP(+). NAD(+) contacts are provided by residues 89 to 91 (GTT) and 113 to 116 (AGNM). The active-site Proton donor/acceptor is His-146. His-147 serves as a coordination point for (S)-2,3,4,5-tetrahydrodipicolinate. Residue Lys-150 is the Proton donor of the active site. Position 156–157 (156–157 (GT)) interacts with (S)-2,3,4,5-tetrahydrodipicolinate.

The protein belongs to the DapB family.

It localises to the cytoplasm. The enzyme catalyses (S)-2,3,4,5-tetrahydrodipicolinate + NAD(+) + H2O = (2S,4S)-4-hydroxy-2,3,4,5-tetrahydrodipicolinate + NADH + H(+). It catalyses the reaction (S)-2,3,4,5-tetrahydrodipicolinate + NADP(+) + H2O = (2S,4S)-4-hydroxy-2,3,4,5-tetrahydrodipicolinate + NADPH + H(+). Its pathway is amino-acid biosynthesis; L-lysine biosynthesis via DAP pathway; (S)-tetrahydrodipicolinate from L-aspartate: step 4/4. Catalyzes the conversion of 4-hydroxy-tetrahydrodipicolinate (HTPA) to tetrahydrodipicolinate. This Pelagibacter ubique (strain HTCC1062) protein is 4-hydroxy-tetrahydrodipicolinate reductase.